A 71-amino-acid chain; its full sequence is Small ribosomal subunit protein bS21 (71 aa).

The tract at residues 39 to 71 is disordered; that stretch reads EKPTQERKRKAAAAVKRQLRRSSRDVTKRQRLY. Over residues 45-59 the composition is skewed to basic residues; it reads RKRKAAAAVKRQLRR. Positions 60–71 are enriched in basic and acidic residues; sequence SSRDVTKRQRLY.

Belongs to the bacterial ribosomal protein bS21 family.

In Stenotrophomonas maltophilia (strain K279a), this protein is Small ribosomal subunit protein bS21.